We begin with the raw amino-acid sequence, 281 residues long: Putative rRNA methyltransferase YqxC (281 aa).

Residues 6-67 (ERLDVLLVER…NPLRYVSRGG (62 aa)) form the S4 RNA-binding domain.

The protein belongs to the TlyA family.

The polypeptide is Putative rRNA methyltransferase YqxC (yqxC) (Bacillus subtilis (strain 168)).